The primary structure comprises 292 residues: Probable deoxyhypusine synthase (292 aa).

Catalysis depends on lysine 267, which acts as the Nucleophile.

Belongs to the deoxyhypusine synthase family. It depends on NAD(+) as a cofactor.

It catalyses the reaction [eIF5A protein]-L-lysine + spermidine = [eIF5A protein]-deoxyhypusine + propane-1,3-diamine. The protein operates within protein modification; eIF5A hypusination. Functionally, catalyzes the NAD-dependent oxidative cleavage of spermidine and the subsequent transfer of the butylamine moiety of spermidine to the epsilon-amino group of a specific lysine residue of the eIF-5A precursor protein to form the intermediate deoxyhypusine residue. In Pyrobaculum aerophilum (strain ATCC 51768 / DSM 7523 / JCM 9630 / CIP 104966 / NBRC 100827 / IM2), this protein is Probable deoxyhypusine synthase (dys).